We begin with the raw amino-acid sequence, 94 residues long: Enhancer of yellow 2 transcription factor (94 aa).

Belongs to the ENY2 family. As to quaternary structure, component of the nuclear pore complex (NPC)-associated AMEX complex (anchoring and mRNA export complex), composed of at least e(y)2 and xmas-2. Component of the SAGA transcription coactivator-HAT complexes, at least composed of Ada2b, e(y)2, Pcaf/Gcn5, Taf10 and Nipped-A/Trrap. Within the SAGA complex, e(y)2, Sgf11, and not/nonstop form an additional subcomplex of SAGA called the DUB module (deubiquitination module). Component of the THO complex, composed of at least e(y)2, HPR1, THO2, THOC5, THOC6 and THOC7. Interacts with e(y)1. Interacts with su(Hw) (via zinc fingers). Interacts with xmas-2; required for localization to the nuclear periphery. Interacts with the nuclear pore complex (NPC).

The protein resides in the nucleus. It is found in the nucleoplasm. The protein localises to the cytoplasm. Functionally, involved in mRNA export coupled transcription activation by association with both the AMEX and the SAGA complexes. The SAGA complex is a multiprotein complex that activates transcription by remodeling chromatin and mediating histone acetylation and deubiquitination. Within the SAGA complex, participates in a subcomplex that specifically deubiquitinates histone H2B. The SAGA complex is recruited to specific gene promoters by activators, where it is required for transcription. Required for nuclear receptor-mediated transactivation. Involved in transcription elongation by recruiting the THO complex onto nascent mRNA. The AMEX complex functions in docking export-competent ribonucleoprotein particles (mRNPs) to the nuclear entrance of the nuclear pore complex (nuclear basket). AMEX participates in mRNA export and accurate chromatin positioning in the nucleus by tethering genes to the nuclear periphery. The sequence is that of Enhancer of yellow 2 transcription factor from Drosophila grimshawi (Hawaiian fruit fly).